We begin with the raw amino-acid sequence, 191 residues long: Thymidine kinase (191 aa).

Residues 15–22 and 88–91 contribute to the ATP site; these read GSMFSGKS and DEVQ. Glu89 (proton acceptor) is an active-site residue. The Zn(2+) site is built by Cys145, Cys148, Cys183, and His186.

The protein belongs to the thymidine kinase family. In terms of assembly, homotetramer.

It localises to the cytoplasm. It catalyses the reaction thymidine + ATP = dTMP + ADP + H(+). This is Thymidine kinase from Macrococcus caseolyticus (strain JCSC5402) (Macrococcoides caseolyticum).